Consider the following 359-residue polypeptide: Methionine import ATP-binding protein MetN (359 aa).

The segment at 1–21 (MSTPASTPAPDGSHQRDHHPG) is disordered. Residues 24 to 264 (VEFRGVTKVF…PQTTVAQRFV (241 aa)) form the ABC transporter domain. 61–68 (GYSGAGKS) serves as a coordination point for ATP.

The protein belongs to the ABC transporter superfamily. Methionine importer (TC 3.A.1.24) family. The complex is composed of two ATP-binding proteins (MetN), two transmembrane proteins (MetI) and a solute-binding protein (MetQ).

Its subcellular location is the cell membrane. It carries out the reaction L-methionine(out) + ATP + H2O = L-methionine(in) + ADP + phosphate + H(+). The enzyme catalyses D-methionine(out) + ATP + H2O = D-methionine(in) + ADP + phosphate + H(+). Part of the ABC transporter complex MetNIQ involved in methionine import. Responsible for energy coupling to the transport system. The polypeptide is Methionine import ATP-binding protein MetN (Corynebacterium efficiens (strain DSM 44549 / YS-314 / AJ 12310 / JCM 11189 / NBRC 100395)).